Here is a 256-residue protein sequence, read N- to C-terminus: MLLAIDVGNTNTVLGVFEGRRLLDHWRVETSTRRTSDEYGILVRQLFTHRGIDPMKVTAVVVSSVVPPLQSNLEKMSERYFRVRPMFIGPGVKTGMPILYDNPREVGADRIVNAVSAYERHHAGVLVVDFGTATTFDAVSPKGEYLGGCICPGINISMEALFQNASKLPRVEFARPPHVIGRNTVHSMQAGLVYGYVGMVDGICARMQAELGFPVKVVATGGLASLVASESKAIHQVDEFLTLEGLRIIYGRNHAS.

ATP is bound at residue 6–13; the sequence is DVGNTNTV. Substrate-binding positions include Y100 and 107-110; that span reads GADR. D109 serves as the catalytic Proton acceptor. A K(+)-binding site is contributed by D129. ATP is bound at residue T132. Residue T184 participates in substrate binding.

Belongs to the type III pantothenate kinase family. In terms of assembly, homodimer. The cofactor is NH4(+). Requires K(+) as cofactor.

It localises to the cytoplasm. It carries out the reaction (R)-pantothenate + ATP = (R)-4'-phosphopantothenate + ADP + H(+). It functions in the pathway cofactor biosynthesis; coenzyme A biosynthesis; CoA from (R)-pantothenate: step 1/5. Its function is as follows. Catalyzes the phosphorylation of pantothenate (Pan), the first step in CoA biosynthesis. The chain is Type III pantothenate kinase from Myxococcus xanthus (strain DK1622).